The primary structure comprises 84 residues: Large ribosomal subunit protein bL27 (84 aa).

Residues 1–22 (MAHKKAGGSTRNGRDSESKRLG) form a disordered region.

This sequence belongs to the bacterial ribosomal protein bL27 family.

This chain is Large ribosomal subunit protein bL27, found in Shewanella sp. (strain MR-4).